The primary structure comprises 329 residues: GMP reductase (329 aa).

Catalysis depends on cysteine 178, which acts as the Thioimidate intermediate. 207–230 (VIADGGIRTHGDIAKSIRMGATMV) is an NADP(+) binding site.

It belongs to the IMPDH/GMPR family. GuaC type 2 subfamily.

It carries out the reaction IMP + NH4(+) + NADP(+) = GMP + NADPH + 2 H(+). Functionally, catalyzes the irreversible NADPH-dependent deamination of GMP to IMP. It functions in the conversion of nucleobase, nucleoside and nucleotide derivatives of G to A nucleotides, and in maintaining the intracellular balance of A and G nucleotides. The protein is GMP reductase of Lactococcus lactis subsp. cremoris (strain SK11).